The sequence spans 195 residues: Shikimate kinase (195 aa).

Gly30–Ala35 provides a ligand contact to ATP. Thr34 is a Mg(2+) binding site. Substrate is bound by residues Asp52, Arg76, and Gly98. An ATP-binding site is contributed by Arg136. Residue Arg155 participates in substrate binding.

This sequence belongs to the shikimate kinase family. In terms of assembly, monomer. Mg(2+) serves as cofactor.

It is found in the cytoplasm. It carries out the reaction shikimate + ATP = 3-phosphoshikimate + ADP + H(+). It participates in metabolic intermediate biosynthesis; chorismate biosynthesis; chorismate from D-erythrose 4-phosphate and phosphoenolpyruvate: step 5/7. Functionally, catalyzes the specific phosphorylation of the 3-hydroxyl group of shikimic acid using ATP as a cosubstrate. The polypeptide is Shikimate kinase (Ruegeria pomeroyi (strain ATCC 700808 / DSM 15171 / DSS-3) (Silicibacter pomeroyi)).